We begin with the raw amino-acid sequence, 510 residues long: NAD(P)H-quinone oxidoreductase subunit 2 A, chloroplastic (510 aa).

The next 13 helical transmembrane spans lie at 24–44, 57–77, 99–119, 124–144, 149–169, 183–203, 227–247, 295–315, 323–343, 354–374, 395–415, 418–438, and 484–504; these read LLLF…GLIL, IPWL…ALLF, IFQF…VEYI, MAIT…MFLC, LITI…LSGY, YLLM…WLYG, PGIS…LSPA, WHLL…LIAI, MLAY…IVGD, YMLF…SFGL, ALSL…AGFF, LHLF…IGLL, and MIVC…IIAI.

The protein belongs to the complex I subunit 2 family. NDH is composed of at least 16 different subunits, 5 of which are encoded in the nucleus.

The protein localises to the plastid. It is found in the chloroplast thylakoid membrane. It catalyses the reaction a plastoquinone + NADH + (n+1) H(+)(in) = a plastoquinol + NAD(+) + n H(+)(out). The catalysed reaction is a plastoquinone + NADPH + (n+1) H(+)(in) = a plastoquinol + NADP(+) + n H(+)(out). Functionally, NDH shuttles electrons from NAD(P)H:plastoquinone, via FMN and iron-sulfur (Fe-S) centers, to quinones in the photosynthetic chain and possibly in a chloroplast respiratory chain. The immediate electron acceptor for the enzyme in this species is believed to be plastoquinone. Couples the redox reaction to proton translocation, and thus conserves the redox energy in a proton gradient. In Carica papaya (Papaya), this protein is NAD(P)H-quinone oxidoreductase subunit 2 A, chloroplastic.